The primary structure comprises 445 residues: Ribulose bisphosphate carboxylase large chain (445 aa).

The substrate site is built by asparagine 89 and threonine 139. The active-site Proton acceptor is lysine 141. Lysine 143 contributes to the substrate binding site. Residues lysine 167, aspartate 169, and glutamate 170 each coordinate Mg(2+). At lysine 167 the chain carries N6-carboxylysine. Catalysis depends on histidine 260, which acts as the Proton acceptor. The substrate site is built by arginine 261, histidine 293, and serine 345.

The protein belongs to the RuBisCO large chain family. Type I subfamily. In terms of assembly, heterohexadecamer of 8 large chains and 8 small chains; disulfide-linked. The disulfide link is formed within the large subunit homodimers. It depends on Mg(2+) as a cofactor. Post-translationally, the disulfide bond which can form in the large chain dimeric partners within the hexadecamer appears to be associated with oxidative stress and protein turnover.

It localises to the plastid. Its subcellular location is the chloroplast. It carries out the reaction 2 (2R)-3-phosphoglycerate + 2 H(+) = D-ribulose 1,5-bisphosphate + CO2 + H2O. The catalysed reaction is D-ribulose 1,5-bisphosphate + O2 = 2-phosphoglycolate + (2R)-3-phosphoglycerate + 2 H(+). RuBisCO catalyzes two reactions: the carboxylation of D-ribulose 1,5-bisphosphate, the primary event in carbon dioxide fixation, as well as the oxidative fragmentation of the pentose substrate in the photorespiration process. Both reactions occur simultaneously and in competition at the same active site. The chain is Ribulose bisphosphate carboxylase large chain from Callicarpa dichotoma (Purple beautyberry).